Consider the following 837-residue polypeptide: Anaphase-promoting complex subunit 2 (837 aa).

A phosphoserine mark is found at Ser-233, Ser-329, Ser-485, Ser-549, and Ser-712. The tract at residues 478–508 (CLETGQDSEDDSGEPEDWVPDPVDADPVKSS) is disordered. The segment covering 483–496 (QDSEDDSGEPEDWV) has biased composition (acidic residues). Tyr-825 is modified (phosphotyrosine).

This sequence belongs to the cullin family. In terms of assembly, the mammalian APC/C is composed at least of 14 distinct subunits ANAPC1, ANAPC2, CDC27/APC3, ANAPC4, ANAPC5, CDC16/APC6, ANAPC7, CDC23/APC8, ANAPC10, ANAPC11, CDC26/APC12, ANAPC13, ANAPC15 and ANAPC16 that assemble into a complex of at least 19 chains with a combined molecular mass of around 1.2 MDa; APC/C interacts with FZR1 and FBXO5. In the context of the APC/C complex, directly interacts with UBE2C and UBE2S. Interacts (via cullin domain) with ANAPC11 and with UBCH10. Interacts with NEUROD2. Interacts with FBXO43; the interaction is direct.

It functions in the pathway protein modification; protein ubiquitination. Together with the RING-H2 protein ANAPC11, constitutes the catalytic component of the anaphase promoting complex/cyclosome (APC/C), a cell cycle-regulated E3 ubiquitin ligase that controls progression through mitosis and the G1 phase of the cell cycle. The APC/C complex acts by mediating ubiquitination and subsequent degradation of target proteins: it mainly mediates the formation of 'Lys-11'-linked polyubiquitin chains and, to a lower extent, the formation of 'Lys-48'- and 'Lys-63'-linked polyubiquitin chains. The APC/C complex catalyzes assembly of branched 'Lys-11'-/'Lys-48'-linked branched ubiquitin chains on target proteins. The CDC20-APC/C complex positively regulates the formation of synaptic vesicle clustering at active zone to the presynaptic membrane in postmitotic neurons. CDC20-APC/C-induced degradation of NEUROD2 drives presynaptic differentiation. The chain is Anaphase-promoting complex subunit 2 (Anapc2) from Mus musculus (Mouse).